Here is a 258-residue protein sequence, read N- to C-terminus: UPF0246 protein YaaA (258 aa).

This sequence belongs to the UPF0246 family.

The polypeptide is UPF0246 protein YaaA (Escherichia coli (strain SE11)).